We begin with the raw amino-acid sequence, 166 residues long: Small ribosomal subunit protein uS4 (166 aa).

The region spanning 102 to 164 (RRLQTIVWRK…HPSCLEVEKE (63 aa)) is the S4 RNA-binding domain.

Belongs to the universal ribosomal protein uS4 family. Part of the 30S ribosomal subunit. Contacts protein S5. The interaction surface between S4 and S5 is involved in control of translational fidelity.

One of the primary rRNA binding proteins, it binds directly to 16S rRNA where it nucleates assembly of the body of the 30S subunit. Its function is as follows. With S5 and S12 plays an important role in translational accuracy. The protein is Small ribosomal subunit protein uS4 of Korarchaeum cryptofilum (strain OPF8).